A 638-amino-acid chain; its full sequence is Adhesion G-protein coupled receptor F2 (638 aa).

Positions M1–A25 are cleaved as a signal peptide. The Extracellular segment spans residues A26–Y386. N-linked (GlcNAc...) asparagine glycans are attached at residues N155, N219, N248, N293, and N311. The region spanning P233–E377 is the GAIN-B domain. Cystine bridges form between C329-C356 and C344-C358. Residues C329–E377 are GPS. The helical transmembrane segment at I387 to W407 threads the bilayer. The Cytoplasmic portion of the chain corresponds to S408–C422. A helical transmembrane segment spans residues I423–L443. Over S444 to L465 the chain is Extracellular. The chain crosses the membrane as a helical span at residues S466 to F486. Residues H487–C493 lie on the Cytoplasmic side of the membrane. The chain crosses the membrane as a helical span at residues L494–L514. Over A515–A541 the chain is Extracellular. The helical transmembrane segment at F542 to I562 threads the bilayer. Topologically, residues K563–N586 are cytoplasmic. Residues I587 to A607 traverse the membrane as a helical segment. Residues G608–S610 lie on the Extracellular side of the membrane. A helical membrane pass occupies residues L611–I631. The Cytoplasmic segment spans residues E632 to C638.

This sequence belongs to the G-protein coupled receptor 2 family. Adhesion G-protein coupled receptor (ADGR) subfamily.

Its subcellular location is the membrane. Functionally, orphan receptor. This Rattus norvegicus (Rat) protein is Adhesion G-protein coupled receptor F2 (Adgrf2).